A 437-amino-acid chain; its full sequence is GTPase Obg (437 aa).

The region spanning 2–160 (SMFLDTAKIK…RNLELELKVL (159 aa)) is the Obg domain. The 178-residue stretch at 161–338 (ADVGLVGFPS…LLEATAELLE (178 aa)) folds into the OBG-type G domain. GTP contacts are provided by residues 167-174 (GFPSVGKS), 192-196 (FTTIV), 214-217 (DLPG), 284-287 (NKMD), and 319-321 (SGI). The Mg(2+) site is built by S174 and T194. The OCT domain maps to 359-437 (GFNPDEPEFA…IGKFEFEFVD (79 aa)).

This sequence belongs to the TRAFAC class OBG-HflX-like GTPase superfamily. OBG GTPase family. As to quaternary structure, monomer. The cofactor is Mg(2+).

The protein resides in the cytoplasm. In terms of biological role, an essential GTPase which binds GTP, GDP and possibly (p)ppGpp with moderate affinity, with high nucleotide exchange rates and a fairly low GTP hydrolysis rate. Plays a role in control of the cell cycle, stress response, ribosome biogenesis and in those bacteria that undergo differentiation, in morphogenesis control. In Streptococcus suis (strain 05ZYH33), this protein is GTPase Obg.